The primary structure comprises 564 residues: 2-succinyl-5-enolpyruvyl-6-hydroxy-3-cyclohexene-1-carboxylate synthase (564 aa).

It belongs to the TPP enzyme family. MenD subfamily. In terms of assembly, homodimer. It depends on Mg(2+) as a cofactor. Requires Mn(2+) as cofactor. Thiamine diphosphate is required as a cofactor.

The catalysed reaction is isochorismate + 2-oxoglutarate + H(+) = 5-enolpyruvoyl-6-hydroxy-2-succinyl-cyclohex-3-ene-1-carboxylate + CO2. Its pathway is quinol/quinone metabolism; 1,4-dihydroxy-2-naphthoate biosynthesis; 1,4-dihydroxy-2-naphthoate from chorismate: step 2/7. It functions in the pathway quinol/quinone metabolism; menaquinone biosynthesis. Its function is as follows. Catalyzes the thiamine diphosphate-dependent decarboxylation of 2-oxoglutarate and the subsequent addition of the resulting succinic semialdehyde-thiamine pyrophosphate anion to isochorismate to yield 2-succinyl-5-enolpyruvyl-6-hydroxy-3-cyclohexene-1-carboxylate (SEPHCHC). The polypeptide is 2-succinyl-5-enolpyruvyl-6-hydroxy-3-cyclohexene-1-carboxylate synthase (Vibrio vulnificus (strain CMCP6)).